A 153-amino-acid chain; its full sequence is Large-conductance mechanosensitive channel (153 aa).

2 helical membrane passes run 16-36 and 88-108; these read VIDLAVGVVIGGAFGSIVKSL and GLFINALVSFTIVAFAIFMLV.

It belongs to the MscL family. As to quaternary structure, homopentamer.

Its subcellular location is the cell inner membrane. Its function is as follows. Channel that opens in response to stretch forces in the membrane lipid bilayer. May participate in the regulation of osmotic pressure changes within the cell. The sequence is that of Large-conductance mechanosensitive channel from Chromobacterium violaceum (strain ATCC 12472 / DSM 30191 / JCM 1249 / CCUG 213 / NBRC 12614 / NCIMB 9131 / NCTC 9757 / MK).